The sequence spans 268 residues: Thiazole synthase (268 aa).

Residue K96 is the Schiff-base intermediate with DXP of the active site. 1-deoxy-D-xylulose 5-phosphate-binding positions include G157, 185–186 (AG), and 207–208 (NT). The tract at residues 238 to 268 (PMRPREAASPSSPVEGVPFTPTGPRPGRGPQ) is disordered. Residues 258 to 268 (PTGPRPGRGPQ) show a composition bias toward pro residues.

Belongs to the ThiG family. As to quaternary structure, homotetramer. Forms heterodimers with either ThiH or ThiS.

The protein localises to the cytoplasm. The enzyme catalyses [ThiS sulfur-carrier protein]-C-terminal-Gly-aminoethanethioate + 2-iminoacetate + 1-deoxy-D-xylulose 5-phosphate = [ThiS sulfur-carrier protein]-C-terminal Gly-Gly + 2-[(2R,5Z)-2-carboxy-4-methylthiazol-5(2H)-ylidene]ethyl phosphate + 2 H2O + H(+). It participates in cofactor biosynthesis; thiamine diphosphate biosynthesis. Its function is as follows. Catalyzes the rearrangement of 1-deoxy-D-xylulose 5-phosphate (DXP) to produce the thiazole phosphate moiety of thiamine. Sulfur is provided by the thiocarboxylate moiety of the carrier protein ThiS. In vitro, sulfur can be provided by H(2)S. The chain is Thiazole synthase from Thermus thermophilus (strain ATCC BAA-163 / DSM 7039 / HB27).